We begin with the raw amino-acid sequence, 28 residues long: QQMCGRCGGTGQIIKNECKTCHGKKVTK.

Intrachain disulfides connect C4-C21 and C7-C18. N6-acetyllysine occurs at positions 15 and 25.

Post-translationally, the two N6-acetyllysines at position 15 and 25 have been deduced from the mass difference of 42. They are not common in venom proteins. In terms of tissue distribution, expressed by the venom gland.

Its subcellular location is the secreted. In vitro, inhibits proliferation of the mice ovarian cancer cells ID8. The protein is Conotoxin Vi14b of Conus virgo (Virgin cone).